Reading from the N-terminus, the 269-residue chain is 4-hydroxy-tetrahydrodipicolinate reductase (269 aa).

Residues 10 to 15, glutamate 36, 99 to 101, and 123 to 126 contribute to the NAD(+) site; these read GANGRM, GTT, and AANF. Histidine 156 functions as the Proton donor/acceptor in the catalytic mechanism. Histidine 157 contacts (S)-2,3,4,5-tetrahydrodipicolinate. The active-site Proton donor is lysine 160. Residue 166–167 coordinates (S)-2,3,4,5-tetrahydrodipicolinate; sequence GT.

Belongs to the DapB family.

Its subcellular location is the cytoplasm. The catalysed reaction is (S)-2,3,4,5-tetrahydrodipicolinate + NAD(+) + H2O = (2S,4S)-4-hydroxy-2,3,4,5-tetrahydrodipicolinate + NADH + H(+). It carries out the reaction (S)-2,3,4,5-tetrahydrodipicolinate + NADP(+) + H2O = (2S,4S)-4-hydroxy-2,3,4,5-tetrahydrodipicolinate + NADPH + H(+). It participates in amino-acid biosynthesis; L-lysine biosynthesis via DAP pathway; (S)-tetrahydrodipicolinate from L-aspartate: step 4/4. Functionally, catalyzes the conversion of 4-hydroxy-tetrahydrodipicolinate (HTPA) to tetrahydrodipicolinate. The sequence is that of 4-hydroxy-tetrahydrodipicolinate reductase from Neisseria meningitidis serogroup A / serotype 4A (strain DSM 15465 / Z2491).